The sequence spans 85 residues: uncharacterized protein (85 aa).

The signal sequence occupies residues 1-19; the sequence is MKTIFTVGAVVLATCLLSG. A lipid anchor (N-palmitoyl cysteine) is attached at Cys-20. Cys-20 carries S-diacylglycerol cysteine lipidation.

The protein localises to the cell outer membrane. This is an uncharacterized protein from Escherichia coli (strain K12).